The chain runs to 236 residues: uncharacterized protein (236 aa).

The protein belongs to the RHS family.

This is an uncharacterized protein from Escherichia coli (strain K12).